The following is an 870-amino-acid chain: Radial spoke head 10 homolog B (870 aa).

Positions 1–16 (MVKEKKKADKKGEKSA) are enriched in basic and acidic residues. The segment at 1 to 43 (MVKEKKKADKKGEKSARSPSSLSDNLDFSKQDGNTTRQEMSPA) is disordered. Over residues 17-39 (RSPSSLSDNLDFSKQDGNTTRQE) the composition is skewed to polar residues. MORN repeat units lie at residues 86 to 108 (YEGE…GGCT), 109 to 131 (YRGM…DGLK), 132 to 154 (YEGD…DGSM), 155 to 177 (YEGE…TQPV), 179 to 201 (YIGH…QEGT), 204 to 226 (YEGD…SGNI), 227 to 249 (YEGQ…TTNE), 251 to 273 (YTGR…LKRI), 284 to 306 (YIGE…SGAM), and 307 to 329 (YDGE…NGRV). The disordered stretch occupies residues 674–704 (NKSPSAVMSHESDAAHSDSARSSSSKLELSP). Residues 683–692 (HESDAAHSDS) show a composition bias toward basic and acidic residues. The segment covering 693–703 (ARSSSSKLELS) has biased composition (low complexity). Residues 784–811 (KEKIRADRLRSTAQAQQRKMEDDELEAR) are a coiled coil. The tract at residues 840–870 (VSSSHLILDPPKEDVTVSPSSKTITSKKKKK) is disordered.

In terms of assembly, interacts with RSPH6A. Does not appear to be part of the axonemal radial spoke complexes 1 or 2.

It is found in the cytoplasm. The protein resides in the cytoskeleton. Its subcellular location is the cilium axoneme. It localises to the cell projection. The protein localises to the cilium. It is found in the flagellum. May function as part of the axonemal radial spoke complex 3 (RS3). Radial spoke complexes are important for ciliary motility. The chain is Radial spoke head 10 homolog B (RSPH10B) from Homo sapiens (Human).